The sequence spans 150 residues: Flagellar assembly factor FliW (150 aa).

Belongs to the FliW family. In terms of assembly, interacts with translational regulator CsrA and flagellin(s).

It is found in the cytoplasm. Functionally, acts as an anti-CsrA protein, binds CsrA and prevents it from repressing translation of its target genes, one of which is flagellin. Binds to flagellin and participates in the assembly of the flagellum. This chain is Flagellar assembly factor FliW, found in Leptospira borgpetersenii serovar Hardjo-bovis (strain JB197).